The primary structure comprises 82 residues: ATP synthase subunit c (82 aa).

Helical transmembrane passes span 7-27 (LVALACGLIVGLGAIGASIGI) and 53-73 (FILAGLIDAAFLIGVAIALLF).

This sequence belongs to the ATPase C chain family. As to quaternary structure, F-type ATPases have 2 components, F(1) - the catalytic core - and F(0) - the membrane proton channel. F(1) has five subunits: alpha(3), beta(3), gamma(1), delta(1), epsilon(1). F(0) has three main subunits: a(1), b(2) and c(10-14). The alpha and beta chains form an alternating ring which encloses part of the gamma chain. F(1) is attached to F(0) by a central stalk formed by the gamma and epsilon chains, while a peripheral stalk is formed by the delta and b chains.

The protein localises to the cell inner membrane. Its function is as follows. F(1)F(0) ATP synthase produces ATP from ADP in the presence of a proton or sodium gradient. F-type ATPases consist of two structural domains, F(1) containing the extramembraneous catalytic core and F(0) containing the membrane proton channel, linked together by a central stalk and a peripheral stalk. During catalysis, ATP synthesis in the catalytic domain of F(1) is coupled via a rotary mechanism of the central stalk subunits to proton translocation. Functionally, key component of the F(0) channel; it plays a direct role in translocation across the membrane. A homomeric c-ring of between 10-14 subunits forms the central stalk rotor element with the F(1) delta and epsilon subunits. The polypeptide is ATP synthase subunit c (Acidovorax ebreus (strain TPSY) (Diaphorobacter sp. (strain TPSY))).